Reading from the N-terminus, the 224-residue chain is Glycerol-3-phosphate acyltransferase (224 aa).

6 helical membrane passes run 4–24 (FVIV…GSIN), 60–80 (LVIF…VYFV), 88–108 (SVVV…FPIW), 124–144 (IISV…LIII), 149–169 (IVSF…FIPW), and 182–202 (WPWW…IWSH).

It belongs to the PlsY family. Probably interacts with PlsX.

It is found in the cell membrane. It carries out the reaction an acyl phosphate + sn-glycerol 3-phosphate = a 1-acyl-sn-glycero-3-phosphate + phosphate. It functions in the pathway lipid metabolism; phospholipid metabolism. In terms of biological role, catalyzes the transfer of an acyl group from acyl-phosphate (acyl-PO(4)) to glycerol-3-phosphate (G3P) to form lysophosphatidic acid (LPA). This enzyme utilizes acyl-phosphate as fatty acyl donor, but not acyl-CoA or acyl-ACP. The chain is Glycerol-3-phosphate acyltransferase from Mycoplasmopsis pulmonis (strain UAB CTIP) (Mycoplasma pulmonis).